The primary structure comprises 568 residues: Protein KATNIP homolog (568 aa).

The segment covering 1-20 (MSDSDLKEIEKNAENIKLEP) has biased composition (basic and acidic residues). The interval 1–30 (MSDSDLKEIEKNAENIKLEPAEDEVNEEDQ) is disordered. Residues 21-30 (AEDEVNEEDQ) are compositionally biased toward acidic residues.

As to expression, expressed in most ciliated neuronal cells. Not expressed in non-ciliated cells.

The protein localises to the cytoplasm. Its subcellular location is the cytoskeleton. The protein resides in the cilium axoneme. It localises to the cilium basal body. May regulate ciliary A-tubule number and, along with arl-13, controls cilium integrity. In Caenorhabditis elegans, this protein is Protein KATNIP homolog.